We begin with the raw amino-acid sequence, 560 residues long: MASDNVASFRWTQALRRGLSNWTNPVKSDVITDTRALLAALDFDRVAQVQRLMRKDKRTDTDLTKLRDLNKEVDALMNMRTTQKDNVLRVGGLSKDELMELASDLQKLKKKVLRVEGSGQPGVYAGNLTTTQLEQRSKILRDMGFAQLRGNPSGVVKVWDIKDSSLLINQFGSMPAVTMACMTEQGGESLNDVVQGLSALGLLYTVKYPNMSDLEKLADQYPCLGYITQEQSQINVSGYNLSLSAAVKAGACMLDGGNMLETIQVKPTMFSSMIKAVLEVKSKERMFVSEAPGQRNPYENLLYKLCLSGDGWPYIGSRSQVKGRAWDNTTVDLTDTGSPNHPPVRNGGSPRLSQLSHAKEEQILEGLKRLDSKATTWIDIEGTPNDPVELAIFQPESGNYIHCYREPHDVKSFKDQSKYSHGMLLKDLTNTQPGLISFIIKNLPAGIVLTAQGSDDIEKLLEMHARRDISIIDVRLTSEQARQFEDKVWDKFGILCNKHKGIVLARKKKGSPPGSKNPHCALLDCIMFCSTIGGFVDDKKPTRLLPLDLLYREQASLIEL.

Positions 53–236 (MRKDKRTDTD…ITQEQSQINV (184 aa)) are binding site for the cap structure m7GTP. The disordered stretch occupies residues 333 to 353 (LTDTGSPNHPPVRNGGSPRLS). Mn(2+)-binding residues include aspartate 379 and glutamate 381. Zn(2+) contacts are provided by glutamate 389, cysteine 496, histidine 499, and cysteine 520. Aspartate 524 contacts Mn(2+).

The protein belongs to the arenaviridae nucleocapsid protein family. As to quaternary structure, homomultimerizes to form the nucleocapsid. Binds to viral genomic RNA. Interacts with glycoprotein G2. Interacts with protein Z; this interaction probably directs the encapsidated genome to budding sites. Interacts with protein L; this interaction does not interfere with Z-L interaction. Interacts with host IKBKE (via Protein kinase domain); the interaction inhibits IKBKE kinase activity.

The protein resides in the virion. It localises to the host cytoplasm. Its function is as follows. Encapsidates the genome, protecting it from nucleases. The encapsidated genomic RNA is termed the nucleocapsid (NC). Serves as template for viral transcription and replication. The increased presence of protein N in host cell does not seem to trigger the switch from transcription to replication as observed in other negative strain RNA viruses. Through the interaction with host IKBKE, strongly inhibits the phosphorylation and nuclear translocation of host IRF3, a protein involved in interferon activation pathway, leading to the inhibition of interferon-beta and IRF3-dependent promoters activation. Also encodes a functional 3'-5' exoribonuclease that degrades preferentially dsRNA substrates and thereby participates in the suppression of interferon induction. This chain is Nucleoprotein, found in Pirital mammarenavirus (isolate Rat/Venezuela/VAV-488/1995) (PIRV).